Consider the following 114-residue polypeptide: Ferritin-like protein (114 aa).

3 residues coordinate Fe cation: glutamate 29, glutamate 59, and histidine 62. The segment at 86–114 (FTDKPITEIEEETSGGSENTGGDLGIRKL) is cargo-loading peptide. A disordered region spans residues 94-114 (IEEETSGGSENTGGDLGIRKL). The span at 103 to 114 (ENTGGDLGIRKL) shows a compositional bias: gly residues.

Belongs to the ferritin-like superfamily. In terms of assembly, probably forms a decamer which binds to the pentameric axis of the interior of the protein shell; as the Flp cargo protein is flexible, packing into the shell is not rigid. 3, 4 or 5 cargo decamers bind inside the encapulin nanocompartment. The cofactor is Fe cation.

The protein localises to the encapsulin nanocompartment. In terms of biological role, cargo protein of a type 1 encapsulin nanocompartment. A ferritin-like protein that probably stores iron in the encapsulin nanocompartment. The protein is Ferritin-like protein of Thermotoga maritima (strain ATCC 43589 / DSM 3109 / JCM 10099 / NBRC 100826 / MSB8).